A 420-amino-acid polypeptide reads, in one-letter code: Serine--tRNA ligase (420 aa).

228-230 (TAE) contacts L-serine. 259–261 (RSE) contacts ATP. Glu282 is an L-serine binding site. 346–349 (EISS) is an ATP binding site. Ser382 is a binding site for L-serine.

It belongs to the class-II aminoacyl-tRNA synthetase family. Type-1 seryl-tRNA synthetase subfamily. In terms of assembly, homodimer. The tRNA molecule binds across the dimer.

It localises to the cytoplasm. It catalyses the reaction tRNA(Ser) + L-serine + ATP = L-seryl-tRNA(Ser) + AMP + diphosphate + H(+). The enzyme catalyses tRNA(Sec) + L-serine + ATP = L-seryl-tRNA(Sec) + AMP + diphosphate + H(+). It participates in aminoacyl-tRNA biosynthesis; selenocysteinyl-tRNA(Sec) biosynthesis; L-seryl-tRNA(Sec) from L-serine and tRNA(Sec): step 1/1. Its function is as follows. Catalyzes the attachment of serine to tRNA(Ser). Is also able to aminoacylate tRNA(Sec) with serine, to form the misacylated tRNA L-seryl-tRNA(Sec), which will be further converted into selenocysteinyl-tRNA(Sec). The protein is Serine--tRNA ligase of Mycoplasmoides gallisepticum (strain R(low / passage 15 / clone 2)) (Mycoplasma gallisepticum).